We begin with the raw amino-acid sequence, 284 residues long: Diaminopimelate epimerase (284 aa).

Positions 13 and 66 each coordinate substrate. Catalysis depends on Cys-75, which acts as the Proton donor. Residues 76–77, Asn-166, Asn-199, and 217–218 each bind substrate; these read GN and ER. The Proton acceptor role is filled by Cys-226. 227–228 is a binding site for substrate; the sequence is GT.

It belongs to the diaminopimelate epimerase family. In terms of assembly, homodimer.

The protein resides in the cytoplasm. It catalyses the reaction (2S,6S)-2,6-diaminopimelate = meso-2,6-diaminopimelate. Its pathway is amino-acid biosynthesis; L-lysine biosynthesis via DAP pathway; DL-2,6-diaminopimelate from LL-2,6-diaminopimelate: step 1/1. Catalyzes the stereoinversion of LL-2,6-diaminopimelate (L,L-DAP) to meso-diaminopimelate (meso-DAP), a precursor of L-lysine and an essential component of the bacterial peptidoglycan. The protein is Diaminopimelate epimerase of Halothermothrix orenii (strain H 168 / OCM 544 / DSM 9562).